Consider the following 149-residue polypeptide: Large ribosomal subunit protein bL9 (149 aa).

The protein belongs to the bacterial ribosomal protein bL9 family.

Its function is as follows. Binds to the 23S rRNA. The sequence is that of Large ribosomal subunit protein bL9 from Thiobacillus denitrificans (strain ATCC 25259 / T1).